The chain runs to 292 residues: Probable serine/threonine-protein kinase FPV226 (292 aa).

A Protein kinase domain is found at 14–292; the sequence is WKIDKLIGCG…DLLRQLVNSL (279 aa). ATP-binding positions include 20-28 and Lys43; that span reads IGCGGFGCV. Asp147 (proton acceptor) is an active-site residue.

It belongs to the protein kinase superfamily. Ser/Thr protein kinase family. Poxviruses subfamily.

The enzyme catalyses L-seryl-[protein] + ATP = O-phospho-L-seryl-[protein] + ADP + H(+). The catalysed reaction is L-threonyl-[protein] + ATP = O-phospho-L-threonyl-[protein] + ADP + H(+). In Vertebrata (FPV), this protein is Probable serine/threonine-protein kinase FPV226.